Reading from the N-terminus, the 164-residue chain is MAKDASFDIVSQVDEQEVTNAVHQAVKEMEQRFDFKGSKSEIRQEQGAIILVSDDEFKLKNVTDILEAKMVKRGISLRALRYGKIESAAGDMVRQKVDLVQGISKENAKKITKLIKDSKIKVQTSVQGDQIRVSGNKRDDLQAVIALLRKADLDIELQFINFRS.

This sequence belongs to the YajQ family.

In terms of biological role, nucleotide-binding protein. In Heliobacterium modesticaldum (strain ATCC 51547 / Ice1), this protein is Nucleotide-binding protein Helmi_22490.